The chain runs to 354 residues: Histidinol-phosphate aminotransferase (354 aa).

The span at 1–11 shows a compositional bias: basic and acidic residues; that stretch reads MKSFLSDKAKS. Residues 1–33 are disordered; the sequence is MKSFLSDKAKSIEPYTPGEQPKDKNYIKLNTNE. At K211 the chain carries N6-(pyridoxal phosphate)lysine.

Belongs to the class-II pyridoxal-phosphate-dependent aminotransferase family. Histidinol-phosphate aminotransferase subfamily. Homodimer. It depends on pyridoxal 5'-phosphate as a cofactor.

The enzyme catalyses L-histidinol phosphate + 2-oxoglutarate = 3-(imidazol-4-yl)-2-oxopropyl phosphate + L-glutamate. Its pathway is amino-acid biosynthesis; L-histidine biosynthesis; L-histidine from 5-phospho-alpha-D-ribose 1-diphosphate: step 7/9. This is Histidinol-phosphate aminotransferase from Brachyspira hyodysenteriae (strain ATCC 49526 / WA1).